The chain runs to 275 residues: Formamidopyrimidine-DNA glycosylase (275 aa).

The active-site Schiff-base intermediate with DNA is the proline 2. The active-site Proton donor is the glutamate 3. Catalysis depends on lysine 58, which acts as the Proton donor; for beta-elimination activity. Positions 92, 111, and 154 each coordinate DNA. Residues 239–273 form an FPG-type zinc finger; sequence HVYHRQGLPCQRCGTPIERIKVAQRGTHFCPHCQV. Arginine 263 acts as the Proton donor; for delta-elimination activity in catalysis.

This sequence belongs to the FPG family. In terms of assembly, monomer. Requires Zn(2+) as cofactor.

The catalysed reaction is Hydrolysis of DNA containing ring-opened 7-methylguanine residues, releasing 2,6-diamino-4-hydroxy-5-(N-methyl)formamidopyrimidine.. The enzyme catalyses 2'-deoxyribonucleotide-(2'-deoxyribose 5'-phosphate)-2'-deoxyribonucleotide-DNA = a 3'-end 2'-deoxyribonucleotide-(2,3-dehydro-2,3-deoxyribose 5'-phosphate)-DNA + a 5'-end 5'-phospho-2'-deoxyribonucleoside-DNA + H(+). Its function is as follows. Involved in base excision repair of DNA damaged by oxidation or by mutagenic agents. Acts as a DNA glycosylase that recognizes and removes damaged bases. Has a preference for oxidized purines, such as 7,8-dihydro-8-oxoguanine (8-oxoG). Has AP (apurinic/apyrimidinic) lyase activity and introduces nicks in the DNA strand. Cleaves the DNA backbone by beta-delta elimination to generate a single-strand break at the site of the removed base with both 3'- and 5'-phosphates. This Pediococcus pentosaceus (strain ATCC 25745 / CCUG 21536 / LMG 10740 / 183-1w) protein is Formamidopyrimidine-DNA glycosylase.